Here is a 363-residue protein sequence, read N- to C-terminus: MINRRQRLEFALTLLPYDPETVQLSETQKKVEAIIARLRTDDSFTEEESDDCKVRRIQDANEFADSAMRHIEMSDSGKLSTLETLTLAAEKLLRTQRSPDQDFDDMVQDVEYSQLMRNTIQAVNEARLKLLQQWERSKRKALDLLTIEIEKVQEMDQEPEHKQSHEQDQDQEQSSEPFNAFRDGADEHNTSTPKTNDEDLGLDDDDEDYVPGGEETMGNKRKRIKKPVTSTPNAKRRCPGFEFDLDGESPMVTIGPNGTEVSRISLSAINWDMTGPSITRKLLCEIFDRDTLAHHTLSGKPSPAFRDCARPSKQQLDPLKVADLVYLMTNSLDMTPREVRTAITTKCADENKMLRSRMQRKSK.

The segment covering 155–168 has biased composition (basic and acidic residues); the sequence is MDQEPEHKQSHEQD. Residues 155–242 are disordered; sequence MDQEPEHKQS…NAKRRCPGFE (88 aa). Residues 198-209 are compositionally biased toward acidic residues; that stretch reads EDLGLDDDDEDY. Residues 255–354 enclose the BEN domain; sequence GPNGTEVSRI…TKCADENKML (100 aa).

In terms of assembly, the heterotrimeric Elba complex consists of Elba1, Elba2 and Elba3.

It is found in the nucleus. The heterotrimeric Elba complex is required for chromatin domain boundary function during early embryogenesis. It binds to a 8-bp sequence 5'-CCAATAAG-3' in the Fab-7 insulator or boundary element in the bithorax complex and contributes to its insulator or boundary activity. Elba1 may act as a transcriptional repressor and binds the palindromic sequence 5'-CCAATTGG-3' to mediate transcriptional repression. The polypeptide is Early boundary activity protein 1 (Drosophila melanogaster (Fruit fly)).